A 432-amino-acid polypeptide reads, in one-letter code: Trigger factor (432 aa).

The 86-residue stretch at 162-247 (GDLVKFDYQG…VKEVQAPVLP (86 aa)) folds into the PPIase FKBP-type domain.

The protein belongs to the FKBP-type PPIase family. Tig subfamily.

It is found in the cytoplasm. The catalysed reaction is [protein]-peptidylproline (omega=180) = [protein]-peptidylproline (omega=0). In terms of biological role, involved in protein export. Acts as a chaperone by maintaining the newly synthesized protein in an open conformation. Functions as a peptidyl-prolyl cis-trans isomerase. This Thiobacillus denitrificans (strain ATCC 25259 / T1) protein is Trigger factor.